Reading from the N-terminus, the 626-residue chain is Basic helix-loop-helix ARNT-like protein 1 (626 aa).

Residues 1–58 are disordered; that stretch reads MADQRMDISSTISDFMSPGPTDLLSSSLGTSGVDCNRKRKGSATDYQESMDTDKDDPH. S17 is modified (phosphoserine; by GSK3-beta). The span at 17–32 shows a compositional bias: low complexity; it reads SPGPTDLLSSSLGTSG. T21 carries the phosphothreonine; by GSK3-beta modification. A Nuclear localization signal motif is present at residues 36 to 41; that stretch reads NRKRKG. Residues 72–125 form the bHLH domain; that stretch reads NAREAHSQIEKRRRDKMNSFIDELASLVPTCNAMSRKLDKLTVLRMAVQHMKTL. Phosphoserine is present on S78. S90 bears the Phosphoserine; by CK2 mark. A Nuclear export signal 1 motif is present at residues 142–152; sequence LSDDELKHLIL. The PAS 1 domain maps to 143-215; it reads SDDELKHLIL…EQLSSSDTAP (73 aa). A Glycyl lysine isopeptide (Lys-Gly) (interchain with G-Cter in SUMO2 and SUMO3) cross-link involves residue K252. K259 is covalently cross-linked (Glycyl lysine isopeptide (Lys-Gly) (interchain with G-Cter in SUMO); alternate). Residue K259 forms a Glycyl lysine isopeptide (Lys-Gly) (interchain with G-Cter in SUMO2); alternate linkage. The PAS 2 domain occupies 326-396; it reads PQPVNGEIRV…ECHRQVLQTR (71 aa). A Nuclear export signal 2 motif is present at residues 361–369; that stretch reads LAYLPQELL. Positions 401–444 constitute a PAC domain; that stretch reads TNCYKFKIKDGSFITLRSRWFSFMNPWTKEVEYIVSTNTVVLAN. Disordered stretches follow at residues 459-492 and 511-595; these read SPHS…RAGA and GSSP…SPSN. The interval 508–588 is interaction with CIART; that stretch reads RIRGSSPSSC…IGIDMIDNDQ (81 aa). A compositionally biased stretch (low complexity) spans 511 to 521; it reads GSSPSSCGSSP. K538 carries the N6-acetyllysine modification.

Component of the circadian clock oscillator which includes the CRY1/2 proteins, CLOCK or NPAS2, BMAL1 or BMAL2, CSNK1D and/or CSNK1E, TIMELESS and the PER1/2/3 proteins. Forms a heterodimer with CLOCK. The CLOCK-BMAL1 heterodimer is required for E-box-dependent transactivation, for CLOCK nuclear translocation and degradation, and, for phosphorylation of both CLOCK and BMAL1. Part of a nuclear complex which also includes RACK1 and PRKCA; RACK1 and PRKCA are recruited to the complex in a circadian manner. Interacts with NPAS2. Interacts with EZH2. Interacts with SUMO3. Interacts with SIRT1. Interacts with AHR. Interacts with ID1, ID2 and ID3. Interacts with DDX4. Interacts with OGT. Interacts with EED and SUZ12. Interacts with MTA1. Interacts with CIART. Interacts with HSP90. Interacts with KAT2B and EP300. Interacts with BHLHE40/DEC1 and BHLHE41/DEC2. Interacts with RELB and the interaction is enhanced in the presence of CLOCK. Interacts with PER1, PER2, CRY1 and CRY2 and this interaction requires a translocation to the nucleus. Interaction of the CLOCK-BMAL1 heterodimer with PER or CRY inhibits transcription activation. Interaction of the CLOCK-BMAL1 with CRY1 is independent of DNA but with PER2 is off DNA. The CLOCK-BMAL1 heterodimer interacts with GSK3B. Interacts with KDM5A. Interacts with KMT2A; in a circadian manner. Interacts with UBE3A. Interacts with PRKCG. Interacts with MAGEL2. Interacts with NCOA2. Interacts with THRAP3. The CLOCK-BMAL1 heterodimer interacts with PASD1. Interacts with PASD1. Interacts with USP9X. Interacts with PIWIL2 (via PIWI domain). Interacts with HDAC3. Interacts with HNF4A. Ubiquitinated, leading to its proteasomal degradation. Deubiquitinated by USP9X. In terms of processing, O-glycosylated; contains O-GlcNAc. O-glycosylation by OGT prevents protein degradation by inhibiting ubiquitination. It also stabilizes the CLOCK-BMAL1 heterodimer thereby increasing CLOCK-BMAL1-mediated transcription of genes in the negative loop of the circadian clock such as PER1/2/3 and CRY1/2. Post-translationally, acetylated on Lys-538 by CLOCK during the repression phase of the circadian cycle. Acetylation facilitates recruitment of CRY1 protein and initiates the repression phase of the circadian cycle. Acetylated at Lys-538 by KAT5 during the activation phase of the cycle, leading to recruitment of the positive transcription elongation factor b (P-TEFb) and BRD4, followed by productive elongation of circadian transcripts. Deacetylated by SIRT1, which may result in decreased protein stability. Phosphorylated upon dimerization with CLOCK. Phosphorylation enhances the transcriptional activity, alters the subcellular localization and decreases the stability of the CLOCK-BMAL1 heterodimer by promoting its degradation. Phosphorylation shows circadian variations in the liver with a peak between CT10 to CT14. Phosphorylation at Ser-90 by CK2 is essential for its nuclear localization, its interaction with CLOCK and controls CLOCK nuclear entry. Dephosphorylation at Ser-78 is important for dimerization with CLOCK and transcriptional activity. In terms of processing, sumoylated on Lys-259 upon dimerization with CLOCK. Predominantly conjugated to poly-SUMO2/3 rather than SUMO1 and the level of these conjugates undergo rhythmic variation, peaking at CT9-CT12. Sumoylation localizes it exclusively to the PML body and promotes its ubiquitination in the PML body, ubiquitin-dependent proteasomal degradation and the transcriptional activity of the CLOCK-BMAL1 heterodimer. Post-translationally, undergoes lysosome-mediated degradation in a time-dependent manner in the liver.

It is found in the nucleus. It localises to the cytoplasm. Its subcellular location is the PML body. In terms of biological role, transcriptional activator which forms a core component of the circadian clock. The circadian clock, an internal time-keeping system, regulates various physiological processes through the generation of approximately 24 hour circadian rhythms in gene expression, which are translated into rhythms in metabolism and behavior. It is derived from the Latin roots 'circa' (about) and 'diem' (day) and acts as an important regulator of a wide array of physiological functions including metabolism, sleep, body temperature, blood pressure, endocrine, immune, cardiovascular, and renal function. Consists of two major components: the central clock, residing in the suprachiasmatic nucleus (SCN) of the brain, and the peripheral clocks that are present in nearly every tissue and organ system. Both the central and peripheral clocks can be reset by environmental cues, also known as Zeitgebers (German for 'timegivers'). The predominant Zeitgeber for the central clock is light, which is sensed by retina and signals directly to the SCN. The central clock entrains the peripheral clocks through neuronal and hormonal signals, body temperature and feeding-related cues, aligning all clocks with the external light/dark cycle. Circadian rhythms allow an organism to achieve temporal homeostasis with its environment at the molecular level by regulating gene expression to create a peak of protein expression once every 24 hours to control when a particular physiological process is most active with respect to the solar day. Transcription and translation of core clock components (CLOCK, NPAS2, BMAL1, BMAL2, PER1, PER2, PER3, CRY1 and CRY2) plays a critical role in rhythm generation, whereas delays imposed by post-translational modifications (PTMs) are important for determining the period (tau) of the rhythms (tau refers to the period of a rhythm and is the length, in time, of one complete cycle). A diurnal rhythm is synchronized with the day/night cycle, while the ultradian and infradian rhythms have a period shorter and longer than 24 hours, respectively. Disruptions in the circadian rhythms contribute to the pathology of cardiovascular diseases, cancer, metabolic syndromes and aging. A transcription/translation feedback loop (TTFL) forms the core of the molecular circadian clock mechanism. Transcription factors, CLOCK or NPAS2 and BMAL1 or BMAL2, form the positive limb of the feedback loop, act in the form of a heterodimer and activate the transcription of core clock genes and clock-controlled genes (involved in key metabolic processes), harboring E-box elements (5'-CACGTG-3') within their promoters. The core clock genes: PER1/2/3 and CRY1/2 which are transcriptional repressors form the negative limb of the feedback loop and interact with the CLOCK|NPAS2-BMAL1|BMAL2 heterodimer inhibiting its activity and thereby negatively regulating their own expression. This heterodimer also activates nuclear receptors NR1D1/2 and RORA/B/G, which form a second feedback loop and which activate and repress BMAL1 transcription, respectively. BMAL1 positively regulates myogenesis and negatively regulates adipogenesis via the transcriptional control of the genes of the canonical Wnt signaling pathway. Plays a role in normal pancreatic beta-cell function; regulates glucose-stimulated insulin secretion via the regulation of antioxidant genes NFE2L2/NRF2 and its targets SESN2, PRDX3, CCLC and CCLM. Negatively regulates the mTORC1 signaling pathway; regulates the expression of MTOR and DEPTOR. Controls diurnal oscillations of Ly6C inflammatory monocytes; rhythmic recruitment of the PRC2 complex imparts diurnal variation to chemokine expression that is necessary to sustain Ly6C monocyte rhythms. Regulates the expression of HSD3B2, STAR, PTGS2, CYP11A1, CYP19A1 and LHCGR in the ovary and also the genes involved in hair growth. Plays an important role in adult hippocampal neurogenesis by regulating the timely entry of neural stem/progenitor cells (NSPCs) into the cell cycle and the number of cell divisions that take place prior to cell-cycle exit. Regulates the circadian expression of CIART and KLF11. The CLOCK-BMAL1 heterodimer regulates the circadian expression of SERPINE1/PAI1, VWF, B3, CCRN4L/NOC, NAMPT, DBP, MYOD1, PPARGC1A, PPARGC1B, SIRT1, GYS2, F7, NGFR, GNRHR, BHLHE40/DEC1, ATF4, MTA1, KLF10 and also genes implicated in glucose and lipid metabolism. Promotes rhythmic chromatin opening, regulating the DNA accessibility of other transcription factors. The NPAS2-BMAL1 heterodimer positively regulates the expression of MAOA, F7 and LDHA and modulates the circadian rhythm of daytime contrast sensitivity by regulating the rhythmic expression of adenylate cyclase type 1 (ADCY1) in the retina. The preferred binding motif for the CLOCK-BMAL1 heterodimer is 5'-CACGTGA-3', which contains a flanking adenine nucleotide at the 3-prime end of the canonical 6-nucleotide E-box sequence. CLOCK specifically binds to the half-site 5'-CAC-3', while BMAL1 binds to the half-site 5'-GTGA-3'. The CLOCK-BMAL1 heterodimer also recognizes the non-canonical E-box motifs 5'-AACGTGA-3' and 5'-CATGTGA-3'. Essential for the rhythmic interaction of CLOCK with ASS1 and plays a critical role in positively regulating CLOCK-mediated acetylation of ASS1. Plays a role in protecting against lethal sepsis by limiting the expression of immune checkpoint protein CD274 in macrophages in a PKM2-dependent manner. Regulates the diurnal rhythms of skeletal muscle metabolism via transcriptional activation of genes promoting triglyceride synthesis (DGAT2) and metabolic efficiency (COQ10B). In Mesocricetus auratus (Golden hamster), this protein is Basic helix-loop-helix ARNT-like protein 1 (BMAL1).